A 219-amino-acid polypeptide reads, in one-letter code: Orotate phosphoribosyltransferase (219 aa).

Residue lysine 26 coordinates 5-phospho-alpha-D-ribose 1-diphosphate. 34 to 35 (FF) serves as a coordination point for orotate. 5-phospho-alpha-D-ribose 1-diphosphate is bound by residues 72–73 (YK), arginine 98, lysine 99, lysine 102, histidine 104, and 124–132 (DDVITAGTA). Threonine 128 and arginine 156 together coordinate orotate.

This sequence belongs to the purine/pyrimidine phosphoribosyltransferase family. PyrE subfamily. Homodimer. The cofactor is Mg(2+).

The enzyme catalyses orotidine 5'-phosphate + diphosphate = orotate + 5-phospho-alpha-D-ribose 1-diphosphate. Its pathway is pyrimidine metabolism; UMP biosynthesis via de novo pathway; UMP from orotate: step 1/2. Catalyzes the transfer of a ribosyl phosphate group from 5-phosphoribose 1-diphosphate to orotate, leading to the formation of orotidine monophosphate (OMP). In Xanthomonas oryzae pv. oryzae (strain MAFF 311018), this protein is Orotate phosphoribosyltransferase.